The primary structure comprises 604 residues: NADP-dependent malic enzyme, mitochondrial (604 aa).

The tract at residues 28–50 is disordered; sequence SAPAQGCHSKSGPPRPVPLKKRG. Catalysis depends on Y137, which acts as the Proton donor. R190 is an NADP(+) binding site. K208 (proton acceptor) is an active-site residue. 3 residues coordinate a divalent metal cation: E280, D281, and D304. D304 contributes to the NADP(+) binding site. The residue at position 371 (S371) is a Phosphoserine. Residue N443 coordinates NADP(+).

Belongs to the malic enzymes family. The cofactor is Mg(2+). It depends on Mn(2+) as a cofactor.

The protein localises to the mitochondrion matrix. The catalysed reaction is (S)-malate + NADP(+) = pyruvate + CO2 + NADPH. The enzyme catalyses oxaloacetate + H(+) = pyruvate + CO2. The chain is NADP-dependent malic enzyme, mitochondrial (Me3) from Mus musculus (Mouse).